Consider the following 53-residue polypeptide: Natriuretic peptide DNP-2 (53 aa).

The cysteines at positions 7 and 23 are disulfide-linked. Positions 39-53 (IIRDLHPDSKQSQAA) are excised as a propeptide.

It belongs to the natriuretic peptide family. Expressed by the venom gland.

The protein resides in the secreted. Its function is as follows. Exhibits vasodilator, natriuretic and diuretic properties in animal models and human tissues. Acts by stimulating cGMP via the natriuretic peptide receptor 1 (NPR1). Is a poor agonist of the atrial natriuretic peptide receptor 2 (NPR2). Is not degraded by neutral endopeptidase (NEP/MME). Binds to atrial natriuretic peptide clearance receptor (NPR-C/NPR3), which may be responsible of the removal of DNP from the circulation. Increases calcium uptake and induces histamine release from rat peritoneal mast cells. Increases calcium-activated potassium (KCa) current in gastric antral circular smooth muscle cells by increasing cGMP production and activating inositol trisphosphate receptors (IP3Rs). In vivo, reduces both systolic and diastolic blood pressure with no effect on heart rate, when intravenously injected in conscious rabbits. This is Natriuretic peptide DNP-2 from Dendroaspis angusticeps (Eastern green mamba).